Here is a 441-residue protein sequence, read N- to C-terminus: Tol-Pal system protein TolB (441 aa).

An N-terminal signal peptide occupies residues 1–23; it reads MRNAIATVLLGLAMLLPVGAVQA. A disordered region spans residues 420–441; the sequence is RNLKPVKTPDGASDPSWSPLQN.

This sequence belongs to the TolB family. The Tol-Pal system is composed of five core proteins: the inner membrane proteins TolA, TolQ and TolR, the periplasmic protein TolB and the outer membrane protein Pal. They form a network linking the inner and outer membranes and the peptidoglycan layer.

The protein localises to the periplasm. Its function is as follows. Part of the Tol-Pal system, which plays a role in outer membrane invagination during cell division and is important for maintaining outer membrane integrity. The chain is Tol-Pal system protein TolB from Ruegeria sp. (strain TM1040) (Silicibacter sp.).